Consider the following 455-residue polypeptide: Argininosuccinate lyase (455 aa).

It belongs to the lyase 1 family. Argininosuccinate lyase subfamily.

It is found in the cytoplasm. The enzyme catalyses 2-(N(omega)-L-arginino)succinate = fumarate + L-arginine. It functions in the pathway amino-acid biosynthesis; L-arginine biosynthesis; L-arginine from L-ornithine and carbamoyl phosphate: step 3/3. This Caulobacter sp. (strain K31) protein is Argininosuccinate lyase.